We begin with the raw amino-acid sequence, 376 residues long: 23S rRNA (uracil(747)-C(5))-methyltransferase RlmC (376 aa).

Cys3, Cys11, Cys14, and Cys87 together coordinate [4Fe-4S] cluster. Positions 212, 241, 262, and 307 each coordinate S-adenosyl-L-methionine. Cys334 functions as the Nucleophile in the catalytic mechanism.

This sequence belongs to the class I-like SAM-binding methyltransferase superfamily. RNA M5U methyltransferase family. RlmC subfamily.

The catalysed reaction is uridine(747) in 23S rRNA + S-adenosyl-L-methionine = 5-methyluridine(747) in 23S rRNA + S-adenosyl-L-homocysteine + H(+). In terms of biological role, catalyzes the formation of 5-methyl-uridine at position 747 (m5U747) in 23S rRNA. The sequence is that of 23S rRNA (uracil(747)-C(5))-methyltransferase RlmC from Citrobacter koseri (strain ATCC BAA-895 / CDC 4225-83 / SGSC4696).